A 210-amino-acid chain; its full sequence is Acetoin utilization protein AcuA (210 aa).

Residues 20–161 (LIEGPVSPED…YRKIMEKMMN (142 aa)) form the N-acetyltransferase domain.

It belongs to the acetyltransferase family. In terms of assembly, monomer.

It functions in the pathway ketone degradation; acetoin degradation. Its activity is regulated as follows. Activity is sensitive to salt concentration, a high concentration of KCL (500 mM) is needed for complete inactivation. Functionally, part of the acuABC operon, which is possibly involved in the breakdown of acetoin and butanediol. Acts as an acetyltransferase inactivating acetyl-CoA synthetase AcsA via acetylation at a Lys residue. The protein is Acetoin utilization protein AcuA (acuA) of Bacillus subtilis (strain 168).